A 464-amino-acid chain; its full sequence is Glutamate--tRNA ligase (464 aa).

Residues 11–21 (PSPTGYLHIGG) carry the 'HIGH' region motif. The short motif at 253–257 (KLSKR) is the 'KMSKS' region element. Residue Lys-256 participates in ATP binding.

The protein belongs to the class-I aminoacyl-tRNA synthetase family. Glutamate--tRNA ligase type 1 subfamily. Monomer.

Its subcellular location is the cytoplasm. The catalysed reaction is tRNA(Glu) + L-glutamate + ATP = L-glutamyl-tRNA(Glu) + AMP + diphosphate. In terms of biological role, catalyzes the attachment of glutamate to tRNA(Glu) in a two-step reaction: glutamate is first activated by ATP to form Glu-AMP and then transferred to the acceptor end of tRNA(Glu). The protein is Glutamate--tRNA ligase of Metamycoplasma arthritidis (strain 158L3-1) (Mycoplasma arthritidis).